The primary structure comprises 458 residues: ATP synthase subunit beta (458 aa).

Residue 148-155 (GGAGVGKT) coordinates ATP.

The protein belongs to the ATPase alpha/beta chains family. As to quaternary structure, F-type ATPases have 2 components, CF(1) - the catalytic core - and CF(0) - the membrane proton channel. CF(1) has five subunits: alpha(3), beta(3), gamma(1), delta(1), epsilon(1). CF(0) has three main subunits: a(1), b(2) and c(9-12). The alpha and beta chains form an alternating ring which encloses part of the gamma chain. CF(1) is attached to CF(0) by a central stalk formed by the gamma and epsilon chains, while a peripheral stalk is formed by the delta and b chains.

It localises to the cell inner membrane. It catalyses the reaction ATP + H2O + 4 H(+)(in) = ADP + phosphate + 5 H(+)(out). Functionally, produces ATP from ADP in the presence of a proton gradient across the membrane. The catalytic sites are hosted primarily by the beta subunits. This Pseudomonas putida (strain W619) protein is ATP synthase subunit beta.